The following is a 158-amino-acid chain: Coenzyme F420 hydrogenase subunit delta (158 aa).

Belongs to the peptidase A31 family.

This Methanothermobacter thermautotrophicus (strain ATCC 29096 / DSM 1053 / JCM 10044 / NBRC 100330 / Delta H) (Methanobacterium thermoautotrophicum) protein is Coenzyme F420 hydrogenase subunit delta (frhD).